We begin with the raw amino-acid sequence, 537 residues long: Tyrosine-protein kinase Fyn (537 aa).

Gly2 carries the N-myristoyl glycine lipid modification. Residues Cys3 and Cys6 are each lipidated (S-palmitoyl cysteine). Thr12 carries the post-translational modification Phosphothreonine; by PKC. In terms of domain architecture, SH3 spans 82–143 (TGVTLFVALY…PSNYVAPVDS (62 aa)). One can recognise an SH2 domain in the interval 149-246 (WYFGKLGRKD…GLCCRLVVPC (98 aa)). Residues 271–524 (LQLIKRLGNG…YLQGFLEDYF (254 aa)) form the Protein kinase domain. ATP-binding positions include 277 to 285 (LGNGQFGEV) and Lys299. The active-site Proton acceptor is Asp390. Tyr420 is modified (phosphotyrosine; by autocatalysis). Residue Tyr531 is modified to Phosphotyrosine.

Belongs to the protein kinase superfamily. Tyr protein kinase family. SRC subfamily. In terms of assembly, associates through its SH3 domain, to the p85 subunit of phosphatidylinositol 3-kinase. The cofactor is Mn(2+).

The catalysed reaction is L-tyrosyl-[protein] + ATP = O-phospho-L-tyrosyl-[protein] + ADP + H(+). Its activity is regulated as follows. Inhibited by phosphorylation of Tyr-531 by leukocyte common antigen and activated by dephosphorylation of this site. Its function is as follows. Tyrosine-protein kinase implicated in the control of cell growth. Plays a role in the regulation of intracellular calcium levels. Required in brain development and mature brain function with important roles in the regulation of axon growth, axon guidance, and neurite extension. Blocks axon outgrowth and attraction induced by ntn1 by phosphorylating its receptor ddc. This Xenopus laevis (African clawed frog) protein is Tyrosine-protein kinase Fyn (fyn).